A 421-amino-acid polypeptide reads, in one-letter code: Probable tRNA N6-adenosine threonylcarbamoyltransferase, mitochondrial (421 aa).

The N-terminal 22 residues, 1 to 22, are a transit peptide targeting the mitochondrion; sequence MNIPKILNNNLVLKRIFCRNYS. A divalent metal cation-binding residues include histidine 133 and histidine 137. Residues 156 to 160, aspartate 189, glycine 208, glutamate 212, 308 to 309, and threonine 336 contribute to the substrate site; these read LLSGG and AN. Residue aspartate 337 coordinates a divalent metal cation.

This sequence belongs to the KAE1 / TsaD family. As to quaternary structure, homodimer. Requires a divalent metal cation as cofactor.

It is found in the mitochondrion. The catalysed reaction is L-threonylcarbamoyladenylate + adenosine(37) in tRNA = N(6)-L-threonylcarbamoyladenosine(37) in tRNA + AMP + H(+). In terms of biological role, required for the formation of a threonylcarbamoyl group on adenosine at position 37 (t(6)A37) in mitochondrial tRNAs that read codons beginning with adenine. Probably involved in the transfer of the threonylcarbamoyl moiety of threonylcarbamoyl-AMP (TC-AMP) to the N6 group of A37. Involved in mitochondrial genome maintenance. The sequence is that of Probable tRNA N6-adenosine threonylcarbamoyltransferase, mitochondrial from Caenorhabditis elegans.